The primary structure comprises 188 residues: Elongation factor P (188 aa).

Belongs to the elongation factor P family.

The protein resides in the cytoplasm. The protein operates within protein biosynthesis; polypeptide chain elongation. Its function is as follows. Involved in peptide bond synthesis. Stimulates efficient translation and peptide-bond synthesis on native or reconstituted 70S ribosomes in vitro. Probably functions indirectly by altering the affinity of the ribosome for aminoacyl-tRNA, thus increasing their reactivity as acceptors for peptidyl transferase. This Rickettsia conorii (strain ATCC VR-613 / Malish 7) protein is Elongation factor P (efp).